The sequence spans 167 residues: Urease accessory protein UreE (167 aa).

The segment at 137-167 is disordered; the sequence is ARGAYHAHGGHSHGHDHGHSHGHDHHDHSHD. Over residues 149–167 the composition is skewed to basic and acidic residues; that stretch reads HGHDHGHSHGHDHHDHSHD.

The protein belongs to the UreE family.

Its subcellular location is the cytoplasm. Functionally, involved in urease metallocenter assembly. Binds nickel. Probably functions as a nickel donor during metallocenter assembly. The protein is Urease accessory protein UreE of Rhizobium rhizogenes (strain K84 / ATCC BAA-868) (Agrobacterium radiobacter).